The chain runs to 150 residues: UPF0178 protein Shewana3_1627 (150 aa).

The protein belongs to the UPF0178 family.

This Shewanella sp. (strain ANA-3) protein is UPF0178 protein Shewana3_1627.